The primary structure comprises 427 residues: MTDTGFFTETLDSRDPDIFGAIRKELGRQRDEIELIASENIVSRAVLEAQGSVLTNKYAEGYPGKRYYGGCQYVDIVEELAIERAKQLFGCEFANVQPNSGSQMNQAVFLALLQPGDTFMGLDLNSGGHLTHGSPVNMSGKWFNVVSYGVRQQDQLLDMDEIRKKAHEHKPKLILAGGTAYSRVWDWAEFRKIADEVGAWLMVDMAHIAGLVAGGQHPSPLPNAHVVTTTTHKSLRGPRGGMVLTNDADIAKKINSAVFPGLQGGPLMHVIAAKAVAFGEALRPDFKDYAAQVVANARAMADELMKGGIDIVSGGTDNHLCLADLRPKGVTGKATEAALGRAHITCNKNGVPFDPEKPFVTSGIRLGAPAGTTRGFKEDEFRQIARWIVEVVDGLAANGEEGNAEVEARVKAEVEALCARFPLYNGL.

Residues L124 and 128–130 (GHL) each bind (6S)-5,6,7,8-tetrahydrofolate. N6-(pyridoxal phosphate)lysine is present on K233.

Belongs to the SHMT family. In terms of assembly, homodimer. Requires pyridoxal 5'-phosphate as cofactor.

The protein resides in the cytoplasm. It catalyses the reaction (6R)-5,10-methylene-5,6,7,8-tetrahydrofolate + glycine + H2O = (6S)-5,6,7,8-tetrahydrofolate + L-serine. It functions in the pathway one-carbon metabolism; tetrahydrofolate interconversion. The protein operates within amino-acid biosynthesis; glycine biosynthesis; glycine from L-serine: step 1/1. In terms of biological role, catalyzes the reversible interconversion of serine and glycine with tetrahydrofolate (THF) serving as the one-carbon carrier. This reaction serves as the major source of one-carbon groups required for the biosynthesis of purines, thymidylate, methionine, and other important biomolecules. Also exhibits THF-independent aldolase activity toward beta-hydroxyamino acids, producing glycine and aldehydes, via a retro-aldol mechanism. The polypeptide is Serine hydroxymethyltransferase (Paracoccus denitrificans (strain Pd 1222)).